A 554-amino-acid polypeptide reads, in one-letter code: Dihydroxy-acid dehydratase (554 aa).

Asp-78 contacts Mg(2+). [2Fe-2S] cluster is bound at residue Cys-119. Residues Asp-120 and Lys-121 each contribute to the Mg(2+) site. Lys-121 carries the post-translational modification N6-carboxylysine. [2Fe-2S] cluster is bound at residue Cys-191. Glu-444 is a binding site for Mg(2+). The active-site Proton acceptor is Ser-470.

This sequence belongs to the IlvD/Edd family. In terms of assembly, homodimer. It depends on [2Fe-2S] cluster as a cofactor. Mg(2+) serves as cofactor.

It catalyses the reaction (2R)-2,3-dihydroxy-3-methylbutanoate = 3-methyl-2-oxobutanoate + H2O. The catalysed reaction is (2R,3R)-2,3-dihydroxy-3-methylpentanoate = (S)-3-methyl-2-oxopentanoate + H2O. It participates in amino-acid biosynthesis; L-isoleucine biosynthesis; L-isoleucine from 2-oxobutanoate: step 3/4. Its pathway is amino-acid biosynthesis; L-valine biosynthesis; L-valine from pyruvate: step 3/4. Functionally, functions in the biosynthesis of branched-chain amino acids. Catalyzes the dehydration of (2R,3R)-2,3-dihydroxy-3-methylpentanoate (2,3-dihydroxy-3-methylvalerate) into 2-oxo-3-methylpentanoate (2-oxo-3-methylvalerate) and of (2R)-2,3-dihydroxy-3-methylbutanoate (2,3-dihydroxyisovalerate) into 2-oxo-3-methylbutanoate (2-oxoisovalerate), the penultimate precursor to L-isoleucine and L-valine, respectively. The protein is Dihydroxy-acid dehydratase of Nitratidesulfovibrio vulgaris (strain ATCC 29579 / DSM 644 / CCUG 34227 / NCIMB 8303 / VKM B-1760 / Hildenborough) (Desulfovibrio vulgaris).